The primary structure comprises 926 residues: Glycogenin (926 aa).

UDP-binding residues include L10, T12, Y16, and R85. The UDP-alpha-D-glucose site is built by L10, T12, Y16, R85, K94, D111, A112, D113, N145, S146, D184, D187, and Q188. D111, A112, and D113 together coordinate UDP. D111 is a Mn(2+) binding site. Residue D113 participates in Mn(2+) binding. The O-linked (Glc...) tyrosine glycan is linked to Y219. The UDP site is built by H236, G239, and K242. Mn(2+) is bound at residue H236. UDP-alpha-D-glucose is bound by residues G239 and K242. 5 disordered regions span residues 379–432 (PSVS…PEMS), 452–476 (YYAHPESHRPATEHKEPEYPTLPKE), 547–584 (SIQNPTPPHPAHSQHQSHATGMGMAGQAPKSPSPPPRH), 611–749 (MSGK…ETVQ), and 768–903 (LPHA…PNTD). Over residues 386 to 402 (LTPPPADAAPAPAPAPV) the composition is skewed to pro residues. Residues 404-413 (TQTEQKTAQP) show a composition bias toward polar residues. The segment covering 456-469 (PESHRPATEHKEPE) has biased composition (basic and acidic residues). Over residues 557–566 (AHSQHQSHAT) the composition is skewed to low complexity. Polar residues predominate over residues 655–683 (SLHSLQSVPGTPRTQYSTFGKSPRLTNAR). A compositionally biased stretch (acidic residues) spans 692 to 704 (EQPEDSADGDDEN). A compositionally biased stretch (basic and acidic residues) spans 733–745 (DRWAQTDRVKTVD). Gly residues predominate over residues 788 to 798 (SGNGRAGGGGQ). A compositionally biased stretch (polar residues) spans 800–812 (EAQTQHQSTYYEY). Low complexity-rich tracts occupy residues 813 to 824 (QQQHPHSQQSRQ) and 851 to 875 (HAQGLAQAQAQAHGQPQGQGANPNL).

Belongs to the glycosyltransferase 8 family. Glycogenin subfamily. It depends on Mn(2+) as a cofactor.

The protein resides in the cytoplasm. The protein localises to the vacuole. It catalyses the reaction L-tyrosyl-[glycogenin] + UDP-alpha-D-glucose = alpha-D-glucosyl-L-tyrosyl-[glycogenin] + UDP + H(+). The catalysed reaction is [1,4-alpha-D-glucosyl](n)-L-tyrosyl-[glycogenin] + UDP-alpha-D-glucose = [1,4-alpha-D-glucosyl](n+1)-L-tyrosyl-[glycogenin] + UDP + H(+). In terms of biological role, self-glucosylating initiator of glycogen synthesis. It catalyzes the formation of a short alpha (1,4)-glucosyl chain covalently attached via a glucose 1-O-tyrosyl linkage to internal tyrosine residues and these chains act as primers for the elongation reaction catalyzed by glycogen synthase. The polypeptide is Glycogenin (Cryptococcus neoformans var. grubii serotype A (strain H99 / ATCC 208821 / CBS 10515 / FGSC 9487) (Filobasidiella neoformans var. grubii)).